A 188-amino-acid chain; its full sequence is Large ribosomal subunit protein eL18A (188 aa).

A disordered region spans residues glycine 153–asparagine 188. Over residues arginine 178–asparagine 188 the composition is skewed to basic residues.

It belongs to the eukaryotic ribosomal protein eL18 family. In terms of assembly, component of the large ribosomal subunit.

The protein localises to the cytoplasm. Component of the large ribosomal subunit. The ribosome is a large ribonucleoprotein complex responsible for the synthesis of proteins in the cell. This Xenopus laevis (African clawed frog) protein is Large ribosomal subunit protein eL18A (rpl18-a).